The following is a 736-amino-acid chain: Catalase-peroxidase (736 aa).

An N-terminal signal peptide occupies residues 1–21; it reads MFKKTILSFVISAVMVTAASA. A cross-link (tryptophyl-tyrosyl-methioninium (Trp-Tyr) (with M-250)) is located at residues 102 to 224; it reads WHAAGTYRTH…LAAVEMGLIY (123 aa). His-103 acts as the Proton acceptor in catalysis. The segment at residues 224–250 is a cross-link (tryptophyl-tyrosyl-methioninium (Tyr-Met) (with W-102)); that stretch reads YVNPVGPHGNPDPLLAANDIRMSFGRM. His-265 serves as a coordination point for heme b.

The protein belongs to the peroxidase family. Peroxidase/catalase subfamily. In terms of assembly, homodimer or homotetramer. It depends on heme b as a cofactor. Post-translationally, formation of the three residue Trp-Tyr-Met cross-link is important for the catalase, but not the peroxidase activity of the enzyme.

It catalyses the reaction H2O2 + AH2 = A + 2 H2O. The catalysed reaction is 2 H2O2 = O2 + 2 H2O. In terms of biological role, bifunctional enzyme with both catalase and broad-spectrum peroxidase activity. In Shewanella woodyi (strain ATCC 51908 / MS32), this protein is Catalase-peroxidase.